A 265-amino-acid polypeptide reads, in one-letter code: Ubiquinone biosynthesis protein COQ4 homolog, mitochondrial (265 aa).

Zn(2+) contacts are provided by His-162, Asp-163, His-166, and Glu-178.

The protein belongs to the COQ4 family. As to quaternary structure, component of a multi-subunit COQ enzyme complex. Zn(2+) is required as a cofactor.

It is found in the mitochondrion inner membrane. The enzyme catalyses a 4-hydroxy-3-methoxy-5-(all-trans-polyprenyl)benzoate + H(+) = a 2-methoxy-6-(all-trans-polyprenyl)phenol + CO2. The protein operates within cofactor biosynthesis; ubiquinone biosynthesis. Functionally, lyase that catalyzes the C1-decarboxylation of 4-hydroxy-3-methoxy-5-(all-trans-polyprenyl)benzoic acid into 2-methoxy-6-(all-trans-polyprenyl)phenol during ubiquinone biosynthesis. The protein is Ubiquinone biosynthesis protein COQ4 homolog, mitochondrial of Drosophila willistoni (Fruit fly).